We begin with the raw amino-acid sequence, 416 residues long: N-carbamoyl-L-amino-acid amidohydrolase (416 aa).

4 residues coordinate a divalent metal cation: His87, Asp98, Glu133, and His194. 5 residues coordinate an N-carbamoyl-L-alpha-amino acid: Gln197, His230, Asn279, Arg292, and Gly361. An involved in dimerization region spans residues 213–331 (HCQGLWWLEF…SIEAVGHFDP (119 aa)). Position 386 (His386) interacts with a divalent metal cation.

The protein belongs to the peptidase M20 family. As to quaternary structure, homodimer. It depends on Mn(2+) as a cofactor. Ni(2+) serves as cofactor. The cofactor is Co(2+). Fe(2+) is required as a cofactor.

The enzyme catalyses an N-carbamoyl-L-alpha-amino acid + H2O + 2 H(+) = an L-alpha-amino acid + NH4(+) + CO2. It carries out the reaction N-carbamoyl-L-methionine + H2O + 2 H(+) = L-methionine + NH4(+) + CO2. It catalyses the reaction N-acetyl-L-methionine + H2O = L-methionine + acetate. The catalysed reaction is N(alpha)-formyl-L-methionine + H2O = formate + L-methionine. The enzyme catalyses N-carbamoyl-L-alanine + H2O + 2 H(+) = L-alanine + NH4(+) + CO2. It carries out the reaction N-carbamoyl-L-cysteine + H2O + 2 H(+) = L-cysteine + NH4(+) + CO2. It catalyses the reaction N-carbamoyl-L-tryptophan + H2O + 2 H(+) = L-tryptophan + NH4(+) + CO2. The catalysed reaction is N-carbamoyl-L-valine + H2O + 2 H(+) = L-valine + NH4(+) + CO2. The enzyme catalyses N-carbamoyl-L-phenylalanine + H2O + 2 H(+) = L-phenylalanine + NH4(+) + CO2. Its activity is regulated as follows. Strongly inhibited by Hg(2+), Cu(2+), Zn(2+), Pb(2+) and Fe(3+) ions, and slightly inhibited by Na(+) and K(+) ions. Beta-mercaptoethanol and 5,5'-dithiobis-(2-nitrobenzoic acid)(DTNB) cause 34% and 42% inhibition, respectively. In terms of biological role, catalyzes the hydrolysis of both aliphatic and aromatic N-carbamoyl-L-alpha-amino acids to free L-alpha-amino acids. Is strictly L-specific since it is inactive toward N-carbamoyl-D-alpha-amino acids. Is also able to hydrolyze N-formyl-L-methionine and N-acetyl-L-methionine, but not ureidosuccinate or 3-ureidopropanoate. In Rhizobium meliloti (Ensifer meliloti), this protein is N-carbamoyl-L-amino-acid amidohydrolase.